Reading from the N-terminus, the 134-residue chain is uncharacterized protein (134 aa).

It localises to the cell membrane. In terms of biological role, may have a role in the regulation of NDH-1 biosynthesis. This is an uncharacterized protein from Paracoccus denitrificans.